A 208-amino-acid polypeptide reads, in one-letter code: Superoxide dismutase [Mn] (208 aa).

The Mn(2+) site is built by histidine 27, histidine 81, aspartate 168, and histidine 172.

This sequence belongs to the iron/manganese superoxide dismutase family. Homodimer. It depends on Mn(2+) as a cofactor.

It catalyses the reaction 2 superoxide + 2 H(+) = H2O2 + O2. Destroys superoxide anion radicals which are normally produced within the cells and which are toxic to biological systems. In Buchnera aphidicola subsp. Baizongia pistaciae (strain Bp), this protein is Superoxide dismutase [Mn] (sodA).